Reading from the N-terminus, the 207-residue chain is MESSRRPLGLTKPSVDQIIKIEAEGISQSRLQLLNPTPGVWFPITPGFLALPSSKRERSFSLQKDKECLLPMESPLQSKRDIGIDTTAVLLKHLMGSRSNYCPDGIFTILAQGPMLEPVMETALKVSSGLQTAKRTPIPALILSKGTQAVMRLFLLGLRPARYCLRAFMLKALEGLHLLADLVRGHNPVGQIIALEAVPTSASLPLL.

Belongs to the coronavirus I protein family.

It localises to the virion. Functionally, structural protein that is not essential for the viral replication either in tissue culture or in its natural host. Confers a small growth advantage. The chain is Protein I (N) from Murine coronavirus (strain A59) (MHV-A59).